The chain runs to 31 residues: Photosystem II reaction center protein T (31 aa).

Position 1 is an N-formylmethionine (M1). The helical transmembrane segment at 3-23 (SVAYILVLTMALAVLFFAIAF) threads the bilayer.

This sequence belongs to the PsbT family. In terms of assembly, PSII is composed of 1 copy each of membrane proteins PsbA, PsbB, PsbC, PsbD, PsbE, PsbF, PsbH, PsbI, PsbJ, PsbK, PsbL, PsbM, PsbT, PsbX, PsbY, PsbZ, Psb30/Ycf12, peripheral proteins PsbO, CyanoQ (PsbQ), PsbU, PsbV and a large number of cofactors. It forms dimeric complexes.

The protein resides in the cellular thylakoid membrane. Functionally, found at the monomer-monomer interface of the photosystem II (PS II) dimer, plays a role in assembly and dimerization of PSII. PSII is a light-driven water plastoquinone oxidoreductase, using light energy to abstract electrons from H(2)O, generating a proton gradient subsequently used for ATP formation. The chain is Photosystem II reaction center protein T from Synechocystis sp. (strain ATCC 27184 / PCC 6803 / Kazusa).